Consider the following 579-residue polypeptide: Isocitrate dehydrogenase kinase/phosphatase (579 aa).

ATP is bound by residues 324-330 (ADGTPGM) and K345. D380 is a catalytic residue.

Belongs to the AceK family.

It localises to the cytoplasm. The catalysed reaction is L-seryl-[isocitrate dehydrogenase] + ATP = O-phospho-L-seryl-[isocitrate dehydrogenase] + ADP + H(+). Bifunctional enzyme which can phosphorylate or dephosphorylate isocitrate dehydrogenase (IDH) on a specific serine residue. This is a regulatory mechanism which enables bacteria to bypass the Krebs cycle via the glyoxylate shunt in response to the source of carbon. When bacteria are grown on glucose, IDH is fully active and unphosphorylated, but when grown on acetate or ethanol, the activity of IDH declines drastically concomitant with its phosphorylation. The polypeptide is Isocitrate dehydrogenase kinase/phosphatase (Xanthomonas euvesicatoria pv. vesicatoria (strain 85-10) (Xanthomonas campestris pv. vesicatoria)).